The primary structure comprises 118 residues: Large ribosomal subunit protein uL18 (118 aa).

It belongs to the universal ribosomal protein uL18 family. Part of the 50S ribosomal subunit; part of the 5S rRNA/L5/L18/L25 subcomplex. Contacts the 5S and 23S rRNAs.

Functionally, this is one of the proteins that bind and probably mediate the attachment of the 5S RNA into the large ribosomal subunit, where it forms part of the central protuberance. The protein is Large ribosomal subunit protein uL18 of Nitrosospira multiformis (strain ATCC 25196 / NCIMB 11849 / C 71).